Consider the following 449-residue polypeptide: Phosphoglucosamine mutase (449 aa).

The active-site Phosphoserine intermediate is Ser-102. Mg(2+) contacts are provided by Ser-102, Asp-241, Asp-243, and Asp-245. The residue at position 102 (Ser-102) is a Phosphoserine.

It belongs to the phosphohexose mutase family. Mg(2+) serves as cofactor. In terms of processing, activated by phosphorylation.

The catalysed reaction is alpha-D-glucosamine 1-phosphate = D-glucosamine 6-phosphate. Functionally, catalyzes the conversion of glucosamine-6-phosphate to glucosamine-1-phosphate. This Pseudoalteromonas translucida (strain TAC 125) protein is Phosphoglucosamine mutase.